Here is a 284-residue protein sequence, read N- to C-terminus: Tropomyosin (284 aa).

Positions 1–284 (MDSIKKKMMA…DTTFAELTSF (284 aa)) form a coiled coil. The segment at 97–140 (EDFEQSSGRLTETSTKLDDASKAAEESERNRKTLETRSISDDER) is disordered. Residues 101–110 (QSSGRLTETS) show a composition bias toward polar residues. The segment covering 111–140 (TKLDDASKAAEESERNRKTLETRSISDDER) has biased composition (basic and acidic residues).

Belongs to the tropomyosin family. As to quaternary structure, homodimer.

Tropomyosin, in association with the troponin complex, plays a central role in the calcium dependent regulation of muscle contraction. This is Tropomyosin from Echinococcus multilocularis (Fox tapeworm).